Consider the following 435-residue polypeptide: Transmembrane protease serine 4 (435 aa).

Residues M1 to V30 are Cytoplasmic-facing. Residues G31–I51 form a helical; Signal-anchor for type II membrane protein membrane-spanning segment. Topologically, residues K52–M435 are extracellular. Positions Y59–A101 constitute an LDL-receptor class A domain. Cystine bridges form between C62–C81, C75–C90, C125–C181, C138–C191, C194–C308, C228–C244, C354–C370, and C381–C408. In terms of domain architecture, SRCR spans V102–R202. N-linked (GlcNAc...) asparagine glycans are attached at residues N128 and N176. Positions V203 to K432 constitute a Peptidase S1 domain. Active-site charge relay system residues include H243 and D288. Residue S385 is the Charge relay system of the active site.

It belongs to the peptidase S1 family. In terms of processing, proteolytically processed; probably by an autocatalytic mechanism.

The protein localises to the cell membrane. It localises to the secreted. Functionally, plasma membrane-anchored serine protease that directly induces processing of pro-uPA/PLAU into the active form through proteolytic activity. Seems to be capable of activating ENaC. The protein is Transmembrane protease serine 4 of Mus musculus (Mouse).